Here is a 297-residue protein sequence, read N- to C-terminus: Zinc finger protein 784 (297 aa).

Pro residues predominate over residues M1–S12. Positions M1–G39 are disordered. S13 carries the phosphoserine modification. C2H2-type zinc fingers lie at residues F64–H86, S100–H122, and Y128–H150. The segment at R149–Q175 is disordered. Polar residues predominate over residues P162–V173. 3 consecutive C2H2-type zinc fingers follow at residues F195–H217, Y223–H245, and F251–H273. Positions K268–S297 are disordered. Residues Q287–S297 are compositionally biased toward polar residues.

Belongs to the krueppel C2H2-type zinc-finger protein family.

It localises to the nucleus. May be involved in transcriptional regulation. The protein is Zinc finger protein 784 (Znf784) of Mus musculus (Mouse).